A 583-amino-acid chain; its full sequence is Malonate--CoA ligase ACSF3, mitochondrial (583 aa).

Residues 1 to 27 (MPPHLALPFRRLFWSLASSQLIPRRHR) constitute a mitochondrion transit peptide. ATP contacts are provided by residues 202–210 (TSGTTGRPK), Asp455, Arg469, and Lys561.

This sequence belongs to the ATP-dependent AMP-binding enzyme family.

The protein resides in the mitochondrion. The catalysed reaction is tetracosanoate + ATP + CoA = tetracosanoyl-CoA + AMP + diphosphate. The enzyme catalyses malonate + ATP + CoA = malonyl-CoA + AMP + diphosphate. Its function is as follows. Catalyzes the initial reaction in intramitochondrial fatty acid synthesis, by activating malonate and methylmalonate, but not acetate, into their respective CoA thioester. May have some preference toward very-long-chain substrates. The sequence is that of Malonate--CoA ligase ACSF3, mitochondrial from Mus musculus (Mouse).